The sequence spans 775 residues: Phosphoribosylformylglycinamidine synthase subunit PurL (775 aa).

The active site involves H81. The ATP site is built by Y84 and K123. E125 serves as a coordination point for Mg(2+). Substrate-binding positions include 126–129 and R148; that span reads SHNH. The active-site Proton acceptor is the H127. Mg(2+) is bound at residue D149. Residue Q272 participates in substrate binding. D300 contacts Mg(2+). 344–346 is a substrate binding site; it reads ESQ. The ATP site is built by D525 and G562. N563 is a binding site for Mg(2+). Residue S565 participates in substrate binding.

The protein belongs to the FGAMS family. As to quaternary structure, monomer. Part of the FGAM synthase complex composed of 1 PurL, 1 PurQ and 2 PurS subunits.

Its subcellular location is the cytoplasm. The enzyme catalyses N(2)-formyl-N(1)-(5-phospho-beta-D-ribosyl)glycinamide + L-glutamine + ATP + H2O = 2-formamido-N(1)-(5-O-phospho-beta-D-ribosyl)acetamidine + L-glutamate + ADP + phosphate + H(+). The protein operates within purine metabolism; IMP biosynthesis via de novo pathway; 5-amino-1-(5-phospho-D-ribosyl)imidazole from N(2)-formyl-N(1)-(5-phospho-D-ribosyl)glycinamide: step 1/2. In terms of biological role, part of the phosphoribosylformylglycinamidine synthase complex involved in the purines biosynthetic pathway. Catalyzes the ATP-dependent conversion of formylglycinamide ribonucleotide (FGAR) and glutamine to yield formylglycinamidine ribonucleotide (FGAM) and glutamate. The FGAM synthase complex is composed of three subunits. PurQ produces an ammonia molecule by converting glutamine to glutamate. PurL transfers the ammonia molecule to FGAR to form FGAM in an ATP-dependent manner. PurS interacts with PurQ and PurL and is thought to assist in the transfer of the ammonia molecule from PurQ to PurL. The polypeptide is Phosphoribosylformylglycinamidine synthase subunit PurL (Agrobacterium fabrum (strain C58 / ATCC 33970) (Agrobacterium tumefaciens (strain C58))).